Reading from the N-terminus, the 465-residue chain is UDP-glycosyltransferase 89A2 (465 aa).

Residues serine 291, 342–344 (VSQ), 359–367 (HCGWNSVLE), and 381–384 (EADQ) each bind UDP-alpha-D-glucose.

This sequence belongs to the UDP-glycosyltransferase family.

Functionally, glucosyltransferase that glucosylates benzoates and benzoate derivatives in vitro. The sequence is that of UDP-glycosyltransferase 89A2 (UGT89A2) from Arabidopsis thaliana (Mouse-ear cress).